The chain runs to 647 residues: Threonine--tRNA ligase (647 aa).

The TGS domain occupies 1-60 (MQVTIEDQSLEAAAGEACGQVLSRAVSGKRLKNAVACLVDGQPRDLAFPLPEDAHELALV). The segment at 242–533 (DHRKLGAQLD…LIEHTAGALP (292 aa)) is catalytic. Residues C334, H385, and H510 each coordinate Zn(2+).

This sequence belongs to the class-II aminoacyl-tRNA synthetase family. Homodimer. Zn(2+) is required as a cofactor.

It localises to the cytoplasm. The enzyme catalyses tRNA(Thr) + L-threonine + ATP = L-threonyl-tRNA(Thr) + AMP + diphosphate + H(+). Its function is as follows. Catalyzes the attachment of threonine to tRNA(Thr) in a two-step reaction: L-threonine is first activated by ATP to form Thr-AMP and then transferred to the acceptor end of tRNA(Thr). Also edits incorrectly charged L-seryl-tRNA(Thr). This Solidesulfovibrio magneticus (strain ATCC 700980 / DSM 13731 / RS-1) (Desulfovibrio magneticus) protein is Threonine--tRNA ligase.